Here is a 222-residue protein sequence, read N- to C-terminus: uncharacterized protein (222 aa).

7 helical membrane passes run 26–46, 48–68, 75–95, 107–127, 139–159, 166–186, and 198–218; these read YGLLALTLAFSGLVAYVSQQM, LPYPNVFVVLIGFYGLFFLTV, WGLVSTFALTGFMGYTLGPIL, VITSAFAMTALVFFGLSAYVL, FITAGFFVLLGAVLVSLFFQI, ISAGFVLFSSAMILYQTSAII, and ISLYVSIYNLFISLLQIFGIA.

This sequence belongs to the BI1 family.

Its subcellular location is the cell membrane. This is an uncharacterized protein from Pseudomonas aeruginosa (strain ATCC 15692 / DSM 22644 / CIP 104116 / JCM 14847 / LMG 12228 / 1C / PRS 101 / PAO1).